The following is a 440-amino-acid chain: Adenosylhomocysteinase (440 aa).

Residues Thr47, Asp123, and Glu148 each contribute to the substrate site. 149 to 151 (TTT) contacts NAD(+). Lys178 and Asp182 together coordinate substrate. NAD(+) is bound by residues Asn183, 228-233 (GFGDVG), Glu251, 307-309 (IGH), and Asn354.

This sequence belongs to the adenosylhomocysteinase family. NAD(+) is required as a cofactor.

It catalyses the reaction S-adenosyl-L-homocysteine + H2O = L-homocysteine + adenosine. The protein operates within amino-acid biosynthesis; L-homocysteine biosynthesis; L-homocysteine from S-adenosyl-L-homocysteine: step 1/1. Functionally, adenosylhomocysteine is a competitive inhibitor of S-adenosyl-L-methionine-dependent methyl transferase reactions; therefore adenosylhomocysteinase may play a key role in the control of methylations via regulation of the intracellular concentration of adenosylhomocysteine. This is Adenosylhomocysteinase (SAHH) from Pneumocystis carinii.